The chain runs to 145 residues: Immune protein Tsi3 (145 aa).

The signal sequence occupies residues 1 to 15 (MKTVALILASLALLA). Residue cysteine 16 is the site of N-palmitoyl cysteine attachment. Cysteine 16 carries S-diacylglycerol cysteine lipidation. The interval 53–85 (FDEGGKLRNPRQLEVQRQDAPPPPDLASRRLGD) is disordered. A Ca(2+)-binding site is contributed by glutamate 126.

In terms of assembly, forms a heterotetramer with Tse3 consisting of two Tse3 dimers and two Tsi3 dimers. Formation of the complex inactivates Tse3 enzymatic activity.

Functionally, immunity protein that plays a role in preventing early activation of toxin Tse3. Occupies Tse3 substrate binding site and prevents the substrate from entering. The sequence is that of Immune protein Tsi3 from Pseudomonas aeruginosa (strain ATCC 15692 / DSM 22644 / CIP 104116 / JCM 14847 / LMG 12228 / 1C / PRS 101 / PAO1).